A 275-amino-acid polypeptide reads, in one-letter code: Methylglyoxal reductase DkgA (275 aa).

Tyr-51 (proton donor) is an active-site residue. Substrate is bound at residue His-107. 187 to 241 (SPLAQGGKGVFDQKVIRDLADKYGKTPAQIVIRWHLDSGLVVIPKSVTPSRIAEN) contributes to the NADP(+) binding site.

The protein belongs to the aldo/keto reductase family. As to quaternary structure, monomer.

It localises to the cytoplasm. It carries out the reaction hydroxyacetone + NADP(+) = methylglyoxal + NADPH + H(+). In terms of biological role, aldo-keto reductase that significantly contributes to cellular methylglyoxal detoxification by catalyzing the NADPH-dependent conversion of methylglyoxal to acetol. This Escherichia coli O157:H7 protein is Methylglyoxal reductase DkgA.